A 454-amino-acid chain; its full sequence is uncharacterized protein (454 aa).

The HNH domain maps to 364–405; sequence CSRPGCDAPAYHSEVHHVTPWTTTHRTDINDLTLACGPDNRL. Positions 415–434 are disordered; the sequence is NAKGDTEWLPPAHLDHGQPR.

Belongs to the Rv1128c/1148c/1588c/1702c/1945/3466 family.

This is an uncharacterized protein from Mycobacterium tuberculosis (strain CDC 1551 / Oshkosh).